The primary structure comprises 144 residues: Granulocyte-macrophage colony-stimulating factor (144 aa).

The first 17 residues, 1–17 (MWLQNLLLLGTVVCSIS), serve as a signal peptide directing secretion. A glycan (O-linked (GalNAc...) serine) is linked at Ser24. Residue Thr27 is glycosylated (O-linked (GalNAc...) threonine). N-linked (GlcNAc...) asparagine glycosylation is found at Asn44, Asn47, and Asn54. Cystine bridges form between Cys71–Cys113 and Cys105–Cys138.

Belongs to the GM-CSF family. In terms of assembly, monomer. The signaling GM-CSF receptor complex is a dodecamer of two head-to-head hexamers of two alpha, two beta, and two ligand subunits.

Its subcellular location is the secreted. In terms of biological role, cytokine that stimulates the growth and differentiation of hematopoietic precursor cells from various lineages, including granulocytes, macrophages, eosinophils and erythrocytes. This Sus scrofa (Pig) protein is Granulocyte-macrophage colony-stimulating factor (CSF2).